Here is a 175-residue protein sequence, read N- to C-terminus: 2-oxo-4-hydroxy-4-carboxy-5-ureidoimidazoline decarboxylase (175 aa).

Histidine 67 functions as the Proton donor in the catalytic mechanism. Substrate is bound by residues proline 68, 84–88, and 119–123; these read SQNEQ and FVICA. A Microbody targeting signal motif is present at residues 173 to 175; the sequence is TKL.

It belongs to the OHCU decarboxylase family.

The protein localises to the peroxisome. It carries out the reaction 5-hydroxy-2-oxo-4-ureido-2,5-dihydro-1H-imidazole-5-carboxylate + H(+) = (S)-allantoin + CO2. It functions in the pathway purine metabolism; urate degradation; (S)-allantoin from urate: step 3/3. Its function is as follows. Catalyzes the stereoselective decarboxylation of 2-oxo-4-hydroxy-4-carboxy-5-ureidoimidazoline (OHCU) to (S)-allantoin. In Xenopus laevis (African clawed frog), this protein is 2-oxo-4-hydroxy-4-carboxy-5-ureidoimidazoline decarboxylase (urad).